Reading from the N-terminus, the 228-residue chain is Ribosomal RNA small subunit methyltransferase G (228 aa).

Residues G70, L75, 120–121, and R138 contribute to the S-adenosyl-L-methionine site; that span reads AE. The tract at residues 207–228 is disordered; it reads RRGDTRGPNRRVSPRRTGGAPA.

This sequence belongs to the methyltransferase superfamily. RNA methyltransferase RsmG family.

The protein localises to the cytoplasm. In terms of biological role, specifically methylates the N7 position of guanine in position 518 of 16S rRNA. The chain is Ribosomal RNA small subunit methyltransferase G from Mycobacterium marinum (strain ATCC BAA-535 / M).